A 176-amino-acid polypeptide reads, in one-letter code: Disulfide bond formation protein B (176 aa).

The Cytoplasmic segment spans residues 1–14 (MLQFLNRCSKGRGA). A helical membrane pass occupies residues 15 to 31 (WLLMALTALVLELVALY). The Periplasmic segment spans residues 32–49 (FQHVMLLQPCVMCIYERA). Cysteines 41 and 44 form a disulfide. A helical transmembrane segment spans residues 50–65 (ALFGILGASLLGAIAP). The Cytoplasmic portion of the chain corresponds to 66 to 71 (KSPLRY). Residues 72–89 (LAIFIWIYSAWKGVQLAW) form a helical membrane-spanning segment. At 90-144 (THTMLQLHPSPFTTCDFFVSFPSWLPLDKWFPAVFVASGDCAVKQWEFLSLEMPQ) the chain is on the periplasmic side. Cys-104 and Cys-130 are oxidised to a cystine. A helical membrane pass occupies residues 145 to 163 (WLVGIFAAYLFIAILVLIS). Residues 164–176 (QFVKPKRRDLFSR) lie on the Cytoplasmic side of the membrane.

This sequence belongs to the DsbB family.

The protein resides in the cell inner membrane. Functionally, required for disulfide bond formation in some periplasmic proteins. Acts by oxidizing the DsbA protein. This chain is Disulfide bond formation protein B, found in Yersinia enterocolitica serotype O:8 / biotype 1B (strain NCTC 13174 / 8081).